We begin with the raw amino-acid sequence, 450 residues long: Phosphoglucosamine mutase (450 aa).

S102 serves as the catalytic Phosphoserine intermediate. Positions 102, 243, 245, and 247 each coordinate Mg(2+). S102 is modified (phosphoserine).

The protein belongs to the phosphohexose mutase family. It depends on Mg(2+) as a cofactor. In terms of processing, activated by phosphorylation.

It carries out the reaction alpha-D-glucosamine 1-phosphate = D-glucosamine 6-phosphate. Functionally, catalyzes the conversion of glucosamine-6-phosphate to glucosamine-1-phosphate. The sequence is that of Phosphoglucosamine mutase from Mesorhizobium japonicum (strain LMG 29417 / CECT 9101 / MAFF 303099) (Mesorhizobium loti (strain MAFF 303099)).